A 444-amino-acid chain; its full sequence is Protein Z-dependent protease inhibitor (444 aa).

The first 21 residues, 1–21 (MKVVPSLLLSVLLAQVWLVPG), serve as a signal peptide directing secretion. The disordered stretch occupies residues 24–65 (PSPQSPETPAPQNQTSRVVQAPKEEEEDEQEASEEKASEEEK). Asn-36 is a glycosylation site (N-linked (GlcNAc...) asparagine). Position 56 is a phosphoserine; by FAM20C (Ser-56). Residues 56–65 (SEEKASEEEK) show a composition bias toward basic and acidic residues. A heparin-binding region spans residues 136–153 (TKPGLLPSLFKGLRETLS). N-linked (GlcNAc...) asparagine glycosylation is found at Asn-180, Asn-197, and Asn-295.

The protein belongs to the serpin family. Interacts with PROZ. In terms of processing, phosphorylated by FAM20C in the extracellular medium. Expressed by the liver and secreted in plasma.

It is found in the secreted. In terms of biological role, inhibits activity of the coagulation protease factor Xa in the presence of PROZ, calcium and phospholipids. Also inhibits factor XIa in the absence of cofactors. The polypeptide is Protein Z-dependent protease inhibitor (SERPINA10) (Homo sapiens (Human)).